The primary structure comprises 375 residues: DNA replication and repair protein RecF (375 aa).

Residue 30-37 (GENAQGKT) coordinates ATP.

This sequence belongs to the RecF family.

The protein localises to the cytoplasm. The RecF protein is involved in DNA metabolism; it is required for DNA replication and normal SOS inducibility. RecF binds preferentially to single-stranded, linear DNA. It also seems to bind ATP. The polypeptide is DNA replication and repair protein RecF (Bacillus cereus (strain G9842)).